The chain runs to 360 residues: Phospho-N-acetylmuramoyl-pentapeptide-transferase (360 aa).

A run of 10 helical transmembrane segments spans residues 18–38, 73–93, 97–117, 134–154, 168–188, 199–219, 236–256, 263–283, 288–308, and 338–358; these read VFSYVTFRAILGLLTALVFSL, TMGGLLILAGIFVSVLLWGDL, YVLVMLFVLGSFGTIGFIDDY, YILQSLAALVVAVFLYSSSTL, VMPQLGLVFIVLAYFTIVGAS, GLAIMPTVMVAGAFALIAYLS, AGELVIVCTAIVGAGLGFLWF, VFMGDVGSLALGAALGAIAVL, ILLVIMGGVFVMETVSVILQV, and VIVRFWIISLFLVLLGLATLK.

This sequence belongs to the glycosyltransferase 4 family. MraY subfamily. It depends on Mg(2+) as a cofactor.

Its subcellular location is the cell inner membrane. It carries out the reaction UDP-N-acetyl-alpha-D-muramoyl-L-alanyl-gamma-D-glutamyl-meso-2,6-diaminopimeloyl-D-alanyl-D-alanine + di-trans,octa-cis-undecaprenyl phosphate = di-trans,octa-cis-undecaprenyl diphospho-N-acetyl-alpha-D-muramoyl-L-alanyl-D-glutamyl-meso-2,6-diaminopimeloyl-D-alanyl-D-alanine + UMP. It participates in cell wall biogenesis; peptidoglycan biosynthesis. Functionally, catalyzes the initial step of the lipid cycle reactions in the biosynthesis of the cell wall peptidoglycan: transfers peptidoglycan precursor phospho-MurNAc-pentapeptide from UDP-MurNAc-pentapeptide onto the lipid carrier undecaprenyl phosphate, yielding undecaprenyl-pyrophosphoryl-MurNAc-pentapeptide, known as lipid I. The chain is Phospho-N-acetylmuramoyl-pentapeptide-transferase from Shewanella denitrificans (strain OS217 / ATCC BAA-1090 / DSM 15013).